A 121-amino-acid chain; its full sequence is Small ribosomal subunit protein uS13 (121 aa).

A disordered region spans residues 91–121 (HRMSLPVRGQRTRTNARTRRGSRKTVAGRKK). Over residues 100–121 (QRTRTNARTRRGSRKTVAGRKK) the composition is skewed to basic residues.

It belongs to the universal ribosomal protein uS13 family. As to quaternary structure, part of the 30S ribosomal subunit. Forms a loose heterodimer with protein S19. Forms two bridges to the 50S subunit in the 70S ribosome.

Located at the top of the head of the 30S subunit, it contacts several helices of the 16S rRNA. In the 70S ribosome it contacts the 23S rRNA (bridge B1a) and protein L5 of the 50S subunit (bridge B1b), connecting the 2 subunits; these bridges are implicated in subunit movement. Contacts the tRNAs in the A and P-sites. This is Small ribosomal subunit protein uS13 from Prochlorococcus marinus (strain MIT 9211).